We begin with the raw amino-acid sequence, 587 residues long: Zinc finger protein 496 (587 aa).

The disordered stretch occupies residues 1–40 (MPTALCPRVLAPKESEEPRKMRSPPGENPSPQGELPSPES). The segment covering 11-20 (APKESEEPRK) has biased composition (basic and acidic residues). A Glycyl lysine isopeptide (Lys-Gly) (interchain with G-Cter in SUMO2) cross-link involves residue K13. One can recognise an SCAN box domain in the interval 42-124 (RRLFRRFRYQ…AAVEALEREP (83 aa)). A Phosphoserine modification is found at S185. A KRAB domain is found at 221–291 (SPFKDMILCF…ELQDLQGKEV (71 aa)). A disordered region spans residues 260–282 (PPNDLAAQPDLSQGEENEPRVPE). S299 carries the phosphoserine modification. A disordered region spans residues 358–399 (SSSGDEDSQHGPYCTEELGSPTEKQRSLPASHRSSTEAGGEV). Residues 389–399 (HRSSTEAGGEV) show a composition bias toward polar residues. K403 participates in a covalent cross-link: Glycyl lysine isopeptide (Lys-Gly) (interchain with G-Cter in SUMO2). The C2H2-type 1; degenerate zinc finger occupies 406 to 428 (YVCPNCGKIFRWRVNFIRHLRSR). C2H2-type zinc fingers lie at residues 435–457 (HECSVCGELFSDSEDLDGHLESH) and 463–485 (YRCGACGKSFRLNSHLLSHRRIH). Residues 488–513 (PDRLQPVEKREQAASEDADKGPKEPL) form a disordered region. K496 participates in a covalent cross-link: Glycyl lysine isopeptide (Lys-Gly) (interchain with G-Cter in SUMO2). C2H2-type zinc fingers lie at residues 522–545 (FQCCECGKAFQRHDHLARHRSHFH) and 553–575 (FQCRYCVKSFTQNYDLLRHERLH).

This sequence belongs to the krueppel C2H2-type zinc-finger protein family. As to quaternary structure, interacts (via zinc-fingers) with JARID2. Interacts with NSD1.

The protein localises to the nucleus. In terms of biological role, DNA-binding transcription factor that can both act as an activator and a repressor. The sequence is that of Zinc finger protein 496 (ZNF496) from Homo sapiens (Human).